Consider the following 166-residue polypeptide: AP-3 complex subunit sigma (166 aa).

This sequence belongs to the adaptor complexes small subunit family. Adaptor protein complex 3 (AP-3) is a heterotetramer composed of two large adaptins (delta-type subunit and beta-type subunit), a medium adaptin (mu-type subunit) and a small adaptin (sigma-type subunit).

It localises to the cytoplasm. The protein resides in the golgi apparatus. The protein localises to the cytoplasmic vesicle membrane. In terms of biological role, part of the AP-3 complex, an adaptor-related complex which seems to be clathrin-associated. The complex is associated with the Golgi region as well as more peripheral structures. It facilitates the budding of vesicles from the Golgi membrane and may be directly involved in trafficking to the vacuole. It also function in maintaining the identity of lytic vacuoles and in regulating the transition between storage and lytic vacuoles. This chain is AP-3 complex subunit sigma, found in Arabidopsis thaliana (Mouse-ear cress).